Consider the following 160-residue polypeptide: Globin CTT-Y (160 aa).

The first 16 residues, 1–16 (MKVLAIFALCIIGALA), serve as a signal peptide directing secretion. The Globin domain maps to 17–160 (TPCDDFKIMQ…IRKVINANLE (144 aa)). Positions 74 and 109 each coordinate heme b.

Belongs to the globin family.

This is Globin CTT-Y (CTT-Y) from Chironomus thummi piger (Midge).